The following is a 603-amino-acid chain: Probable methyltransferase PMT4 (603 aa).

The Cytoplasmic segment spans residues 1 to 12 (MKVASVIGLRPR). The helical; Signal-anchor for type II membrane protein transmembrane segment at 13–33 (ISGLLFLTLGVIALITILVPN) threads the bilayer. Over 34 to 603 (SDSSSTTSTT…LVCQKPLLKK (570 aa)) the chain is Lumenal. N-linked (GlcNAc...) asparagine glycosylation is found at N96 and N393.

Belongs to the methyltransferase superfamily.

The protein resides in the endoplasmic reticulum membrane. This Arabidopsis thaliana (Mouse-ear cress) protein is Probable methyltransferase PMT4.